The following is a 154-amino-acid chain: Ribonuclease H (154 aa).

One can recognise an RNase H type-1 domain in the interval 1–142 (MLKHIDLYTD…CDELARDAAS (142 aa)). Mg(2+) contacts are provided by Asp10, Glu48, Asp70, and Asp134. Basic and acidic residues predominate over residues 126-147 (GHPENERCDELARDAASGKELA). Positions 126–154 (GHPENERCDELARDAASGKELAEDTGYQP) are disordered.

It belongs to the RNase H family. As to quaternary structure, monomer. Mg(2+) is required as a cofactor.

It localises to the cytoplasm. It carries out the reaction Endonucleolytic cleavage to 5'-phosphomonoester.. Functionally, endonuclease that specifically degrades the RNA of RNA-DNA hybrids. This chain is Ribonuclease H, found in Aeromonas salmonicida (strain A449).